The chain runs to 492 residues: Transmembrane protein 39B (492 aa).

Residues 1–53 (MGGRRGPNRTSYYRNPLCEPGSSGASGGGHSSSASVSSVRSRSRTTSGTGLSS) form a disordered region. The N-linked (GlcNAc...) asparagine glycan is linked to asparagine 8. Residues 31–53 (SSSASVSSVRSRSRTTSGTGLSS) are compositionally biased toward low complexity. A run of 8 helical transmembrane segments spans residues 77-97 (SILFELQLFFCQLIALFVHYI), 115-135 (TSLNFHLIDFNLLMVTAIVLG), 153-175 (SLFRSILLFLTRFTVLTATGWSL), 185-205 (TYSFLNLLFLCYPFGMYIPFL), 288-308 (EVLVSSMLSAYYVAFVPVWFV), 322-342 (LFLLVSISTSVILMQHLLPAS), 421-441 (ILNILLLLEGAVIVYQLYSLM), and 447-467 (HQTISLALILFSNYYAFFKLL).

Belongs to the TMEM39 family.

The protein localises to the endoplasmic reticulum membrane. In terms of biological role, may protect the cells against DNA damage caused by exposure to the cold-warming stress and facilitates tissue damage repair during the recovery phase. This is Transmembrane protein 39B from Mus musculus (Mouse).